The following is a 464-amino-acid chain: Protein FAM90A11 (464 aa).

Disordered stretches follow at residues Met1–Leu42, Pro70–Ala389, and His415–Pro437. 2 stretches are compositionally biased toward basic and acidic residues: residues Gly74–Val89 and Asn97–Arg114. Residues Leu180–Leu197 show a composition bias toward low complexity. Polar residues predominate over residues Gly341–Val356.

It belongs to the FAM90 family.

In Homo sapiens (Human), this protein is Protein FAM90A11.